Consider the following 217-residue polypeptide: MSMTEQEARAWIEGRVPRGTMAGLEKLVAMILDEMPRQNLIAASTAESIWTRHIVDSAQLVPMVGKGGPLRWIDLGSGAGFPGMVVALMLPELRMTLVESRRKRIDFLRFMAESLGIADRVTVAGQRLEMLESSPHDVISARAFAPLDRLLPLAHRFSHDATLWLLPKGRSAASELEAVTTSWQGDFRVVPSMTDPEAAIIVASQVQPRGKGQKGRR.

Residues glycine 76, phenylalanine 81, 128–129 (LE), and arginine 142 each bind S-adenosyl-L-methionine.

Belongs to the methyltransferase superfamily. RNA methyltransferase RsmG family.

Its subcellular location is the cytoplasm. The catalysed reaction is guanosine(527) in 16S rRNA + S-adenosyl-L-methionine = N(7)-methylguanosine(527) in 16S rRNA + S-adenosyl-L-homocysteine. Specifically methylates the N7 position of guanine in position 527 of 16S rRNA. In Rhizorhabdus wittichii (strain DSM 6014 / CCUG 31198 / JCM 15750 / NBRC 105917 / EY 4224 / RW1) (Sphingomonas wittichii), this protein is Ribosomal RNA small subunit methyltransferase G.